The sequence spans 297 residues: Acetyl-coenzyme A carboxylase carboxyl transferase subunit beta (297 aa).

Residues 27-296 form the CoA carboxyltransferase N-terminal domain; that stretch reads LWHKCPSCEA…PEAAKEVAAV (270 aa). Residues cysteine 31, cysteine 34, cysteine 50, and cysteine 53 each coordinate Zn(2+). The segment at 31 to 53 adopts a C4-type zinc-finger fold; that stretch reads CPSCEAVLYRPELEKTLDVCPKC.

It belongs to the AccD/PCCB family. As to quaternary structure, acetyl-CoA carboxylase is a heterohexamer composed of biotin carboxyl carrier protein (AccB), biotin carboxylase (AccC) and two subunits each of ACCase subunit alpha (AccA) and ACCase subunit beta (AccD). Zn(2+) serves as cofactor.

Its subcellular location is the cytoplasm. The enzyme catalyses N(6)-carboxybiotinyl-L-lysyl-[protein] + acetyl-CoA = N(6)-biotinyl-L-lysyl-[protein] + malonyl-CoA. Its pathway is lipid metabolism; malonyl-CoA biosynthesis; malonyl-CoA from acetyl-CoA: step 1/1. Functionally, component of the acetyl coenzyme A carboxylase (ACC) complex. Biotin carboxylase (BC) catalyzes the carboxylation of biotin on its carrier protein (BCCP) and then the CO(2) group is transferred by the transcarboxylase to acetyl-CoA to form malonyl-CoA. In Pseudomonas entomophila (strain L48), this protein is Acetyl-coenzyme A carboxylase carboxyl transferase subunit beta.